The following is a 601-amino-acid chain: Glutamyl-tRNA(Gln) amidotransferase subunit B, mitochondrial (601 aa).

Residues 1–55 (MLRPWLRQCPRATRSLACPQCHLPRPQTARRALRPLPALSLSHPIRSLQTTTTES) constitute a mitochondrion transit peptide.

Belongs to the GatB/GatE family. GatB subfamily. As to quaternary structure, subunit of the heterotrimeric GatCAB amidotransferase (AdT) complex, composed of A, B and C subunits.

It is found in the mitochondrion. It catalyses the reaction L-glutamyl-tRNA(Gln) + L-glutamine + ATP + H2O = L-glutaminyl-tRNA(Gln) + L-glutamate + ADP + phosphate + H(+). Its function is as follows. Allows the formation of correctly charged Gln-tRNA(Gln) through the transamidation of misacylated Glu-tRNA(Gln) in the mitochondria. The reaction takes place in the presence of glutamine and ATP through an activated gamma-phospho-Glu-tRNA(Gln). This chain is Glutamyl-tRNA(Gln) amidotransferase subunit B, mitochondrial, found in Aspergillus niger (strain ATCC MYA-4892 / CBS 513.88 / FGSC A1513).